The chain runs to 166 residues: Protein-export protein SecB (166 aa).

Belongs to the SecB family. As to quaternary structure, homotetramer, a dimer of dimers. One homotetramer interacts with 1 SecA dimer.

It localises to the cytoplasm. Its function is as follows. One of the proteins required for the normal export of preproteins out of the cell cytoplasm. It is a molecular chaperone that binds to a subset of precursor proteins, maintaining them in a translocation-competent state. It also specifically binds to its receptor SecA. This chain is Protein-export protein SecB, found in Actinobacillus pleuropneumoniae serotype 7 (strain AP76).